A 290-amino-acid chain; its full sequence is Small ribosomal subunit biogenesis GTPase RsgA (290 aa).

A CP-type G domain is found at 62–219 (RTCLKRPAVA…VADTPGFSRL (158 aa)). GTP-binding positions include 111 to 114 (NKAD) and 161 to 169 (GPSGVGKSS). Zn(2+)-binding residues include Cys-243, Cys-248, His-250, and Cys-256.

The protein belongs to the TRAFAC class YlqF/YawG GTPase family. RsgA subfamily. As to quaternary structure, monomer. Associates with 30S ribosomal subunit, binds 16S rRNA. Zn(2+) is required as a cofactor.

Its subcellular location is the cytoplasm. In terms of biological role, one of several proteins that assist in the late maturation steps of the functional core of the 30S ribosomal subunit. Helps release RbfA from mature subunits. May play a role in the assembly of ribosomal proteins into the subunit. Circularly permuted GTPase that catalyzes slow GTP hydrolysis, GTPase activity is stimulated by the 30S ribosomal subunit. The protein is Small ribosomal subunit biogenesis GTPase RsgA of Moorella thermoacetica (strain ATCC 39073 / JCM 9320).